Reading from the N-terminus, the 614-residue chain is MTTLDSNNNTGGVITYIGSSGSSPNRTSPESLYSDSSNGSFQSLTQGCPTYFPPSPTGSLTQDPARSFGSIPPSLGDDGSPSSSSSSSSSSSSSFYNGSPPGGLQVALEDGNRVSPSKSTSNITKLNGMVLLCKVCGDVASGFHYGVHACEGCKGFFRRSIQQNIQYKRCLKNENCSIVRINRNRCQQCRFKKCLSVGMSRDAVRFGRIPKREKQRMLAEMQSAMNLANNQLSSQCPLETPPTQHPTPGPMGPSPPPAPAPSPLVGFSQFPQQLTPPRSPSPEPTVEDVISQVARAHREIFTYAHDKLGTSPGNFNANHASGNRPATTPHRWESQGCPPAPNDNIMAAQRHNEALNSLRQASSSYPPPWPPGATHHSCHQPNSNGHRLCPTHVYPAPEGEAPVNSPRQGNSKNVLLACPMNMYPHGRSGRTVQEIWEDFSMSFTPAVREVVEFAKHIPGFRDLSQHDQVTLLKAGTFEVLMVRFASLFNVKDQTVMFLSRTTYSLQELGAMGMGDLLNAMFDFSEKLNSLALTEEELGLFTAVVLVSADRSGMENSASVEQLQETLLRALRALVLKNRPSETSRFTKLLLKLPDLRTLNNMHSEKLLSFRVDAQ.

The span at 1–48 shows a compositional bias: polar residues; that stretch reads MTTLDSNNNTGGVITYIGSSGSSPNRTSPESLYSDSSNGSFQSLTQGC. The tract at residues 1-70 is required for phosphorylation by CSNK1E and cytoplasmic localization; it reads MTTLDSNNNT…TQDPARSFGS (70 aa). The tract at residues 1–120 is disordered; sequence MTTLDSNNNT…GNRVSPSKST (120 aa). The tract at residues 1–129 is modulating; sequence MTTLDSNNNT…TSNITKLNGM (129 aa). The interval 49–285 is crucial for activation of GJA1; the sequence is PTYFPPSPTG…PPRSPSPEPT (237 aa). S55 and S59 each carry phosphoserine; by GSK3-beta. Positions 69-103 are enriched in low complexity; sequence GSIPPSLGDDGSPSSSSSSSSSSSSSFYNGSPPGG. A DNA-binding region (nuclear receptor) is located at residues 130–206; that stretch reads VLLCKVCGDV…VGMSRDAVRF (77 aa). 2 consecutive NR C4-type zinc fingers follow at residues 133-153 and 170-194; these read CKVC…CEGC and CLKN…FKKC. Residues K192 and K193 each carry the N6-acetyllysine; by KAT5 modification. Residues 233 to 286 form a disordered region; it reads SSQCPLETPPTQHPTPGPMGPSPPPAPAPSPLVGFSQFPQQLTPPRSPSPEPTV. The span at 239–262 shows a compositional bias: pro residues; that stretch reads ETPPTQHPTPGPMGPSPPPAPAPS. Position 275 is a phosphothreonine; by CDK1 (T275). Residues 285-614 form the NR LBD domain; that stretch reads TVEDVISQVA…KLLSFRVDAQ (330 aa). C418 provides a ligand contact to heme. K591 bears the N6-acetyllysine mark. H602 contacts heme.

It belongs to the nuclear hormone receptor family. NR1 subfamily. Binds DNA as a monomer or a homodimer. Interacts with C1D, NR2E3, SP1 and ZNHIT1. Interacts with OPHN1 (via C-terminus). Interacts with PER2; the interaction associates PER2 to BMAL1 promoter region. Interacts with CRY1. Interacts with CCAR2. Interacts with SIAH2. Interacts with FBXW7 and CDK1. Interacts with HUWE1. Interacts with NR0B2. Interacts with NFIL3. Interacts (via domain NR LBD) with HSP90AA1 and HSP90AB1. Post-translationally, ubiquitinated, leading to its proteasomal degradation. Ubiquitinated by the SCF(FBXW7) complex when phosphorylated by CDK1 leading to its proteasomal degradation. Ubiquitinated by SIAH2; leading to its proteasomal degradation. Rapidly ubiquitinated in response to inflammatory triggers and sumoylation is a prerequisite to its ubiquitination. In terms of processing, sumoylated by UBE2I, desumoylated by SENP1, and sumoylation is a prerequisite to its ubiquitination. Phosphorylated by CSNK1E; phosphorylation enhances its cytoplasmic localization. Post-translationally, undergoes lysosome-mediated degradation in a time-dependent manner in the liver. Expressed in all tissues and cell lines examined. Expressed at high levels in some squamous carcinoma cell lines.

It is found in the nucleus. It localises to the cytoplasm. The protein localises to the cell projection. The protein resides in the dendrite. Its subcellular location is the dendritic spine. Its function is as follows. Transcriptional repressor which coordinates circadian rhythm and metabolic pathways in a heme-dependent manner. Integral component of the complex transcription machinery that governs circadian rhythmicity and forms a critical negative limb of the circadian clock by directly repressing the expression of core clock components BMAL1, CLOCK and CRY1. Also regulates genes involved in metabolic functions, including lipid and bile acid metabolism, adipogenesis, gluconeogenesis and the macrophage inflammatory response. Acts as a receptor for heme which stimulates its interaction with the NCOR1/HDAC3 corepressor complex, enhancing transcriptional repression. Recognizes two classes of DNA response elements within the promoter of its target genes and can bind to DNA as either monomers or homodimers, depending on the nature of the response element. Binds as a monomer to a response element composed of the consensus half-site motif 5'-[A/G]GGTCA-3' preceded by an A/T-rich 5' sequence (RevRE), or as a homodimer to a direct repeat of the core motif spaced by two nucleotides (RevDR-2). Acts as a potent competitive repressor of ROR alpha (RORA) function and regulates the levels of its ligand heme by repressing the expression of PPARGC1A, a potent inducer of heme synthesis. Regulates lipid metabolism by repressing the expression of APOC3 and by influencing the activity of sterol response element binding proteins (SREBPs); represses INSIG2 which interferes with the proteolytic activation of SREBPs which in turn govern the rhythmic expression of enzymes with key functions in sterol and fatty acid synthesis. Regulates gluconeogenesis via repression of G6PC1 and PEPCK and adipocyte differentiation via repression of PPARG. Regulates glucagon release in pancreatic alpha-cells via the AMPK-NAMPT-SIRT1 pathway and the proliferation, glucose-induced insulin secretion and expression of key lipogenic genes in pancreatic-beta cells. Positively regulates bile acid synthesis by increasing hepatic expression of CYP7A1 via repression of NR0B2 and NFIL3 which are negative regulators of CYP7A1. Modulates skeletal muscle oxidative capacity by regulating mitochondrial biogenesis and autophagy; controls mitochondrial biogenesis and respiration by interfering with the STK11-PRKAA1/2-SIRT1-PPARGC1A signaling pathway. Represses the expression of SERPINE1/PAI1, an important modulator of cardiovascular disease and the expression of inflammatory cytokines and chemokines in macrophages. Represses gene expression at a distance in macrophages by inhibiting the transcription of enhancer-derived RNAs (eRNAs). Plays a role in the circadian regulation of body temperature and negatively regulates thermogenic transcriptional programs in brown adipose tissue (BAT); imposes a circadian oscillation in BAT activity, increasing body temperature when awake and depressing thermogenesis during sleep. In concert with NR2E3, regulates transcriptional networks critical for photoreceptor development and function. In addition to its activity as a repressor, can also act as a transcriptional activator. In the ovarian granulosa cells acts as a transcriptional activator of STAR which plays a role in steroid biosynthesis. In collaboration with SP1, activates GJA1 transcription in a heme-independent manner. Represses the transcription of CYP2B10, CYP4A10 and CYP4A14. Represses the transcription of CES2. Represses and regulates the circadian expression of TSHB in a NCOR1-dependent manner. Negatively regulates the protein stability of NR3C1 and influences the time-dependent subcellular distribution of NR3C1, thereby affecting its transcriptional regulatory activity. Plays a critical role in the circadian control of neutrophilic inflammation in the lung; under resting, non-stress conditions, acts as a rhythmic repressor to limit inflammatory activity whereas in the presence of inflammatory triggers undergoes ubiquitin-mediated degradation thereby relieving inhibition of the inflammatory response. Plays a key role in the circadian regulation of microglial activation and neuroinflammation; suppresses microglial activation through the NF-kappaB pathway in the central nervous system. Plays a role in the regulation of the diurnal rhythms of lipid and protein metabolism in the skeletal muscle via transcriptional repression of genes controlling lipid and amino acid metabolism in the muscle. The sequence is that of Nuclear receptor subfamily 1 group D member 1 (NR1D1) from Ovis aries (Sheep).